Consider the following 1277-residue polypeptide: Myosin-1 (1277 aa).

A compositionally biased stretch (basic residues) spans 1 to 13 (MAPSKKAGKKVTP). Residues 1-27 (MAPSKKAGKKVTPKKAAGNNAKSKVAK) are disordered. The region spanning 39-718 (VGVTDMTLLT…TLFALETMRD (680 aa)) is the Myosin motor domain. Position 132–139 (132–139 (GESGAGKT)) interacts with ATP. The residue at position 360 (Ser360) is a Phosphoserine. Residues 407–489 (IIGILDIFGF…PGIFAALNDA (83 aa)) form an actin-binding region. The tract at residues 567–587 (LFPDRPDPNSKKRPPTASDRI) is disordered. 2 consecutive IQ domains span residues 722-742 (HNMA…KHEC) and 743-768 (ARRI…YGHQ). Residues 776–965 (RRRFSLLSYR…TVHVPSGEPA (190 aa)) form the TH1 domain. 2 disordered regions span residues 952-1072 (YKSH…AEPE) and 1129-1259 (PKAA…GPGQ). Over residues 1015–1056 (PAVATPSVVSTPAAAAVVSKPKPAASTPAAVRAPAVTPAARS) the composition is skewed to low complexity. A compositionally biased stretch (pro residues) spans 1057–1068 (VPPPPPPPPPAR). The SH3 domain occupies 1071-1129 (PEKEMYRAKFDFQGQEGEMSLTKDDEVELIEKDENGWWLVKKDGVEAWAPYNYLERIAP). Over residues 1132–1142 (APAPPPPPARP) the composition is skewed to pro residues. Polar residues-rich tracts occupy residues 1145 to 1159 (TSTV…TTAD) and 1185 to 1197 (AATT…SSRP). A compositionally biased stretch (pro residues) spans 1204–1224 (VPPPVAAKPKPPVVAPKPGVP). Residues 1226–1240 (PGGKPALPTTARPAP) are compositionally biased toward low complexity. The segment covering 1241-1258 (SGGGAAAGRLGGGGGGPG) has biased composition (gly residues).

The protein belongs to the TRAFAC class myosin-kinesin ATPase superfamily. Myosin family. In terms of processing, phosphorylation of the TEDS site (Ser-360) is required for the polarization of the actin cytoskeleton. Phosphorylation probably activates the myosin-I ATPase activity.

It localises to the cytoplasm. The protein resides in the cytoskeleton. Its subcellular location is the actin patch. Functionally, type-I myosin implicated in the organization of the actin cytoskeleton. Required for proper actin cytoskeleton polarization. At the cell cortex, assembles in patch-like structures together with proteins from the actin-polymerizing machinery and promotes actin assembly. Functions as actin nucleation-promoting factor (NPF) for the Arp2/3 complex. This chain is Myosin-1 (MYO1), found in Coprinopsis cinerea (strain Okayama-7 / 130 / ATCC MYA-4618 / FGSC 9003) (Inky cap fungus).